The following is a 402-amino-acid chain: Putative PDZ domain-containing protein PDZK1P1 (402 aa).

2 PDZ domains span residues 12–93 (RLCY…VDKE) and 121–206 (IVEM…VDKE). Positions 230–258 (GSVKEAPAPTPTSLEVSSPPDTTEEEDHK) are disordered. Residues 240-250 (PTSLEVSSPPD) show a composition bias toward polar residues. In terms of domain architecture, PDZ 3 spans 261 to 341 (LCRLAKGENG…NVTLLVCGKK (81 aa)). Residues 362 to 402 (DTPPDSKEGIVVESKHDSHMAKERAHSTASHSSSNSEDTEM) are disordered. Positions 365–387 (PDSKEGIVVESKHDSHMAKERAH) are enriched in basic and acidic residues. Residues 388 to 402 (STASHSSSNSEDTEM) show a composition bias toward low complexity.

Belongs to the NHER family.

This chain is Putative PDZ domain-containing protein PDZK1P1, found in Homo sapiens (Human).